The primary structure comprises 355 residues: Methylthioribose-1-phosphate isomerase (355 aa).

Residues 50-52 (RGA), Arg-93, and Gln-198 each bind substrate. Asp-239 serves as the catalytic Proton donor. Substrate is bound at residue 249–250 (NK).

This sequence belongs to the eIF-2B alpha/beta/delta subunits family. MtnA subfamily. As to quaternary structure, homodimer.

It carries out the reaction 5-(methylsulfanyl)-alpha-D-ribose 1-phosphate = 5-(methylsulfanyl)-D-ribulose 1-phosphate. It participates in amino-acid biosynthesis; L-methionine biosynthesis via salvage pathway; L-methionine from S-methyl-5-thio-alpha-D-ribose 1-phosphate: step 1/6. Catalyzes the interconversion of methylthioribose-1-phosphate (MTR-1-P) into methylthioribulose-1-phosphate (MTRu-1-P). This chain is Methylthioribose-1-phosphate isomerase, found in Geobacillus thermodenitrificans (strain NG80-2).